A 512-amino-acid chain; its full sequence is 2-isopropylmalate synthase (512 aa).

Residues 5-268 (LIIFDTTLRD…DLGIATQHIL (264 aa)) enclose the Pyruvate carboxyltransferase domain. Positions 14, 202, 204, and 239 each coordinate Mn(2+). The tract at residues 394 to 512 (GFVSLFQQSE…NKADRVAAQG (119 aa)) is regulatory domain.

This sequence belongs to the alpha-IPM synthase/homocitrate synthase family. LeuA type 1 subfamily. In terms of assembly, homodimer. Mn(2+) is required as a cofactor.

It localises to the cytoplasm. The catalysed reaction is 3-methyl-2-oxobutanoate + acetyl-CoA + H2O = (2S)-2-isopropylmalate + CoA + H(+). The protein operates within amino-acid biosynthesis; L-leucine biosynthesis; L-leucine from 3-methyl-2-oxobutanoate: step 1/4. Functionally, catalyzes the condensation of the acetyl group of acetyl-CoA with 3-methyl-2-oxobutanoate (2-ketoisovalerate) to form 3-carboxy-3-hydroxy-4-methylpentanoate (2-isopropylmalate). In Verminephrobacter eiseniae (strain EF01-2), this protein is 2-isopropylmalate synthase.